We begin with the raw amino-acid sequence, 352 residues long: Putative histone-lysine N-methyltransferase ASHH4 (352 aa).

The AWS domain occupies 60–109 (DHGIFCSCSLDPGSSTLCGSDCNCGILLSSCSSSCKCSSECTNKPFQQRH). Residues 111-228 (KKMKLVQTEK…KGEQLTYDYQ (118 aa)) enclose the SET domain. The region spanning 234–250 (ADQDCYCGAVCCRKKLG) is the Post-SET domain.

Belongs to the class V-like SAM-binding methyltransferase superfamily. Histone-lysine methyltransferase family. SET2 subfamily.

It is found in the nucleus. It localises to the chromosome. The protein localises to the centromere. The enzyme catalyses L-lysyl-[histone] + S-adenosyl-L-methionine = N(6)-methyl-L-lysyl-[histone] + S-adenosyl-L-homocysteine + H(+). Functionally, histone methyltransferase. This is Putative histone-lysine N-methyltransferase ASHH4 (ASHH4) from Arabidopsis thaliana (Mouse-ear cress).